The chain runs to 400 residues: NADH-quinone oxidoreductase subunit D (400 aa).

This sequence belongs to the complex I 49 kDa subunit family. As to quaternary structure, NDH-1 is composed of 14 different subunits. Subunits NuoB, C, D, E, F, and G constitute the peripheral sector of the complex.

The protein localises to the cell inner membrane. The catalysed reaction is a quinone + NADH + 5 H(+)(in) = a quinol + NAD(+) + 4 H(+)(out). Its function is as follows. NDH-1 shuttles electrons from NADH, via FMN and iron-sulfur (Fe-S) centers, to quinones in the respiratory chain. The immediate electron acceptor for the enzyme in this species is believed to be a menaquinone. Couples the redox reaction to proton translocation (for every two electrons transferred, four hydrogen ions are translocated across the cytoplasmic membrane), and thus conserves the redox energy in a proton gradient. In Chlorobium phaeovibrioides (strain DSM 265 / 1930) (Prosthecochloris vibrioformis (strain DSM 265)), this protein is NADH-quinone oxidoreductase subunit D.